Here is a 180-residue protein sequence, read N- to C-terminus: Endoribonuclease YbeY (180 aa).

Residues His149, His153, and His159 each coordinate Zn(2+).

It belongs to the endoribonuclease YbeY family. The cofactor is Zn(2+).

The protein resides in the cytoplasm. Functionally, single strand-specific metallo-endoribonuclease involved in late-stage 70S ribosome quality control and in maturation of the 3' terminus of the 16S rRNA. This is Endoribonuclease YbeY from Prochlorococcus marinus subsp. pastoris (strain CCMP1986 / NIES-2087 / MED4).